Reading from the N-terminus, the 213-residue chain is Thiamine-phosphate synthase (213 aa).

4-amino-2-methyl-5-(diphosphooxymethyl)pyrimidine-binding positions include 40–44 (QFREK) and asparagine 75. Mg(2+) is bound by residues aspartate 76 and aspartate 95. Residue serine 113 participates in 4-amino-2-methyl-5-(diphosphooxymethyl)pyrimidine binding. 139–141 (TPS) provides a ligand contact to 2-[(2R,5Z)-2-carboxy-4-methylthiazol-5(2H)-ylidene]ethyl phosphate. Lysine 142 lines the 4-amino-2-methyl-5-(diphosphooxymethyl)pyrimidine pocket. 2-[(2R,5Z)-2-carboxy-4-methylthiazol-5(2H)-ylidene]ethyl phosphate-binding positions include glycine 171 and 191-192 (IS).

Belongs to the thiamine-phosphate synthase family. Mg(2+) serves as cofactor.

The enzyme catalyses 2-[(2R,5Z)-2-carboxy-4-methylthiazol-5(2H)-ylidene]ethyl phosphate + 4-amino-2-methyl-5-(diphosphooxymethyl)pyrimidine + 2 H(+) = thiamine phosphate + CO2 + diphosphate. It carries out the reaction 2-(2-carboxy-4-methylthiazol-5-yl)ethyl phosphate + 4-amino-2-methyl-5-(diphosphooxymethyl)pyrimidine + 2 H(+) = thiamine phosphate + CO2 + diphosphate. The catalysed reaction is 4-methyl-5-(2-phosphooxyethyl)-thiazole + 4-amino-2-methyl-5-(diphosphooxymethyl)pyrimidine + H(+) = thiamine phosphate + diphosphate. It functions in the pathway cofactor biosynthesis; thiamine diphosphate biosynthesis; thiamine phosphate from 4-amino-2-methyl-5-diphosphomethylpyrimidine and 4-methyl-5-(2-phosphoethyl)-thiazole: step 1/1. Its function is as follows. Condenses 4-methyl-5-(beta-hydroxyethyl)thiazole monophosphate (THZ-P) and 2-methyl-4-amino-5-hydroxymethyl pyrimidine pyrophosphate (HMP-PP) to form thiamine monophosphate (TMP). This chain is Thiamine-phosphate synthase, found in Staphylococcus aureus (strain bovine RF122 / ET3-1).